The following is a 394-amino-acid chain: Chalcone synthase 4 (394 aa).

Residue cysteine 165 is part of the active site.

Belongs to the thiolase-like superfamily. Chalcone/stilbene synthases family.

It catalyses the reaction (E)-4-coumaroyl-CoA + 3 malonyl-CoA + 3 H(+) = 2',4,4',6'-tetrahydroxychalcone + 3 CO2 + 4 CoA. Its pathway is secondary metabolite biosynthesis; flavonoid biosynthesis. Its function is as follows. The primary product of this enzyme is 4,2',4',6'-tetrahydroxychalcone (also termed naringenin-chalcone or chalcone) which can under specific conditions spontaneously isomerize into naringenin. The chain is Chalcone synthase 4 (CHS4) from Bromheadia finlaysoniana (Orchid).